Here is a 278-residue protein sequence, read N- to C-terminus: Dehydrogenase/reductase SDR family member 4 (278 aa).

36 to 60 (LVTASTDGIGFAIARRLAQDGAHVV) lines the NADP(+) pocket. Position 92 is an N6-acetyllysine; alternate (Lys92). Lys92 bears the N6-succinyllysine; alternate mark. Lys105 is subject to N6-acetyllysine. Position 169 (Ser169) interacts with substrate. Tyr182 serves as the catalytic Proton acceptor. Lys186 serves as a coordination point for NADP(+). Position 216 is an N6-acetyllysine; alternate (Lys216). Lys216 is subject to N6-succinyllysine; alternate. Ser220 is modified (phosphoserine). N6-succinyllysine is present on residues Lys227 and Lys234. A Peroxisomal targeting signal motif is present at residues 276-278 (SRL).

Belongs to the short-chain dehydrogenases/reductases (SDR) family. Homotetramer.

Its subcellular location is the peroxisome. The enzyme catalyses a secondary alcohol + NADP(+) = a ketone + NADPH + H(+). The catalysed reaction is 3beta-hydroxy-5beta-pregnane-20-one + NADP(+) = 5beta-pregnan-3,20-dione + NADPH + H(+). It catalyses the reaction 5beta-dihydrotestosterone + NADPH + H(+) = 5beta-androstane-3beta,17beta-diol + NADP(+). It carries out the reaction 5beta-androstane-3,17-dione + NADPH + H(+) = 3beta-hydroxy-5beta-androstane-17-one + NADP(+). The enzyme catalyses isatin + NADPH + H(+) = 3-hydroxyindolin-2-one + NADP(+). The catalysed reaction is lithocholate + NADP(+) = 3-oxo-5beta-cholan-24-oate + NADPH + H(+). It catalyses the reaction 3-oxo-5beta-cholan-24-oate + NADPH + H(+) = isolithocholate + NADP(+). NADPH-dependent oxidoreductase which catalyzes the reduction of a variety of compounds bearing carbonyl groups including ketosteroids, alpha-dicarbonyl compounds, aldehydes, aromatic ketones and quinones. Reduces 3-ketosteroids and benzil into 3beta-hydroxysteroids and R-benzoin, respectively, in contrast to the stereoselectivity of non-primate DHRS4s which produce 3alpha-hydroxysteroids and S-benzoin. Diplays low activity toward all-trans-retinal and no activity toward 9-cis-retinal as compared to non-primate mammals. In the reverse reaction, catalyze the NAD-dependent oxidation of 3beta-hydroxysteroids and alcohol, but with much lower efficiency. Involved in the metabolism of 3beta-hydroxysteroids, isatin and xenobiotic carbonyl compounds. The chain is Dehydrogenase/reductase SDR family member 4 (DHRS4) from Pongo abelii (Sumatran orangutan).